A 483-amino-acid polypeptide reads, in one-letter code: Shutoff alkaline exonuclease (483 aa).

It belongs to the herpesviridae alkaline nuclease family. As to quaternary structure, forms a complex with the DNA polymerase, the DNA polymerase processivity factor, and the major DNA binding protein.

The protein resides in the host nucleus. The protein localises to the host cytoplasm. Its function is as follows. Plays a role in processing non linear or branched viral DNA intermediates in order to promote the production of mature packaged unit-length linear progeny viral DNA molecules. Exhibits endonuclease and exonuclease activities and accepts both double-stranded and single-stranded DNA as substrate. Exonuclease digestion of DNA is in the 5'-&gt; 3' direction and the products are 5'-monophosphate nucleosides. Additionally, forms a recombinase with the major DNA-binding protein, which displays strand exchange activity. Also acts as a cytoplasmic RNA endonuclease that induces degradation of the majority of the cellular messenger RNAs during early lytic infection. The resulting inhibition of cellular protein synthesis serves to ensure maximal viral gene expression and evasion from host immune response. Internally cleaves host mRNAs which are then degraded by the cellular exonuclease XRN1. Bypasses therefore the regulatory steps of deadenylation and decapping normally required for XRN1 activation. This is Shutoff alkaline exonuclease (37) from Saimiriine herpesvirus 2 (strain 11) (SaHV-2).